Reading from the N-terminus, the 564-residue chain is MFS-type transporter astH (564 aa).

A glycan (N-linked (GlcNAc...) asparagine) is linked at Asn-23. The interval 26-59 (KDTLVNCSPDPENPEKGQASSPRTQISVDDNEES) is disordered. Residues 43-53 (QASSPRTQISV) are compositionally biased toward polar residues. 4 helical membrane passes run 69 to 89 (LAMIMISLCLAVFCLALDTTI), 106 to 126 (DVGWYGSAYLLTTSALTLSFG), 143 to 163 (GMFEIGSLICGATPNSLGLII), and 197 to 217 (GILGGLFGVASVVGPLIGGAF). The N-linked (GlcNAc...) asparagine glycan is linked to Asn-220. 6 helical membrane-spanning segments follow: residues 225–245 (WCFYINLPLGAVTGLFLILFF), 266–286 (LLGSLCFLPAIICVLLALQWG), 297–317 (IIALFTVFGVLLLAFAGVQWW), 339–359 (LFSFCLNASFIIFTYYLPMWF), 375–395 (LPMVLAVVIFSIISGGLVGAL), and 396–416 (GYYTPFMVIAPLIAAIGAGLL). Asn-425 carries an N-linked (GlcNAc...) asparagine glycan. The next 2 membrane-spanning stretches (helical) occupy residues 461–481 (TGTVIVMFMQTIGGAIFMSVG) and 537–557 (FYVAVAMAVLALPGALVMQWI).

This sequence belongs to the major facilitator superfamily. TCR/Tet family.

The protein localises to the membrane. Functionally, MFS-type transporter; part of the gene cluster that mediates the biosynthesis of astellolides, drimane-type sesquiterpene esters that show antimicrobial, anti-inflammatory, and anti-tumor activities. Seems not to be involved in astellolides translocation. The polypeptide is MFS-type transporter astH (Aspergillus oryzae (strain ATCC 42149 / RIB 40) (Yellow koji mold)).